The primary structure comprises 242 residues: MRKILLPYPAGCATGTFVRRVKRFSVEMTRDGESVWVHSNNSGSMLGLLRPGATMLASPAANPDRKLAWTHEAMRCHGDGPQGFWVGVNTSVPNRMVEAAFHAGRLPWAQGYDTFRRERKRGDSRLDARLDGPGLPTLWVECKNVTMVEDDVACFPDAVTERGSKHLREMMDIVSRGERAAMFYLVQRPDGVCFGPADVIDPQYAALFWEAVDAGVEMHPHRGIVSPAGIDLGEVLPLTRCR.

Belongs to the SfsA family.

The protein is Sugar fermentation stimulation protein homolog of Nitratidesulfovibrio vulgaris (strain DP4) (Desulfovibrio vulgaris).